The chain runs to 594 residues: MFGRTYYCGEITEKAIGEKVVLKGWVQKRRDLGGLIFIDLRDRTGIVQVVFSPEVSKEALNVAEKVRNEYVLSVEGTVVAREEGTINPNLPTGKIEIQAERITIINEAKTPPFVITDQTDVAEEVRLKYRYLDLRRPVMFRTLQLRHRVTKAIRDFLDGEGFLEVETPILTKSTPEGARDYLVPSRVHPGEFYALPQSPQIFKQLLMVAGFERYYQIARCFRDEDLRADRQPEFTQIDIETSFMSQEEIMQLTERMMAYVMKMAKGIDISLPFPRMSYDEAISRYGSDKPDTRFGLELVDVSEIVKNSSFKVFAGAIANGGQVKAINVKGAADQYSRKDIDALAEFVARYGAKGLAWLKVEEDGLKGPIAKFFTEEEQNGLIRTLEAEAGDLLLFVADHKTVVANALGALRVKLGKDLNLIDETKFNFLWITDWPLLEYDEEDGRYYAAHHPFTMPVREDLPQLETNPEKVRAQAYDLVLNGYELGGGSMRIFEREVQEKMFRALGFTEEEARKQFGFLLEAFEYGTPPHGGIALGLDRLVMLLAGRTNLRDTIAFPKTASASCLLTEAPSPVSEQQLEELHLVVNSEKKSEQY.

E176 is an L-aspartate binding site. The segment at 200-203 (QIFK) is aspartate. R222 is an L-aspartate binding site. Residues 222-224 (RDE) and Q231 contribute to the ATP site. Position 450 (H450) interacts with L-aspartate. E484 is a binding site for ATP. R491 is a binding site for L-aspartate. Residue 536-539 (GLDR) participates in ATP binding.

It belongs to the class-II aminoacyl-tRNA synthetase family. Type 1 subfamily. Homodimer.

It localises to the cytoplasm. The catalysed reaction is tRNA(Asx) + L-aspartate + ATP = L-aspartyl-tRNA(Asx) + AMP + diphosphate. Aspartyl-tRNA synthetase with relaxed tRNA specificity since it is able to aspartylate not only its cognate tRNA(Asp) but also tRNA(Asn). Reaction proceeds in two steps: L-aspartate is first activated by ATP to form Asp-AMP and then transferred to the acceptor end of tRNA(Asp/Asn). The chain is Aspartate--tRNA(Asp/Asn) ligase from Geobacillus sp. (strain WCH70).